A 177-amino-acid chain; its full sequence is Large ribosomal subunit protein uL6 (177 aa).

A compositionally biased stretch (basic and acidic residues) spans 152-171; that stretch reads RPPEPYKGKGVRYDDEEVRR. The segment at 152–177 is disordered; the sequence is RPPEPYKGKGVRYDDEEVRRKEAKKK.

Belongs to the universal ribosomal protein uL6 family. Part of the 50S ribosomal subunit.

This protein binds to the 23S rRNA, and is important in its secondary structure. It is located near the subunit interface in the base of the L7/L12 stalk, and near the tRNA binding site of the peptidyltransferase center. The chain is Large ribosomal subunit protein uL6 from Shewanella putrefaciens (strain CN-32 / ATCC BAA-453).